A 133-amino-acid polypeptide reads, in one-letter code: Large ribosomal subunit protein bL12 (133 aa).

Belongs to the bacterial ribosomal protein bL12 family. Homodimer. Part of the ribosomal stalk of the 50S ribosomal subunit. Forms a multimeric L10(L12)X complex, where L10 forms an elongated spine to which 2 to 4 L12 dimers bind in a sequential fashion. Binds GTP-bound translation factors.

Functionally, forms part of the ribosomal stalk which helps the ribosome interact with GTP-bound translation factors. Is thus essential for accurate translation. In Ehrlichia chaffeensis (strain ATCC CRL-10679 / Arkansas), this protein is Large ribosomal subunit protein bL12.